Here is a 189-residue protein sequence, read N- to C-terminus: Elongation factor P (189 aa).

This sequence belongs to the elongation factor P family.

It localises to the cytoplasm. The protein operates within protein biosynthesis; polypeptide chain elongation. In terms of biological role, involved in peptide bond synthesis. Stimulates efficient translation and peptide-bond synthesis on native or reconstituted 70S ribosomes in vitro. Probably functions indirectly by altering the affinity of the ribosome for aminoacyl-tRNA, thus increasing their reactivity as acceptors for peptidyl transferase. In Pseudomonas syringae pv. tomato (strain ATCC BAA-871 / DC3000), this protein is Elongation factor P.